Consider the following 279-residue polypeptide: Bis(5'-nucleosyl)-tetraphosphatase, symmetrical (279 aa).

The protein belongs to the Ap4A hydrolase family.

It carries out the reaction P(1),P(4)-bis(5'-adenosyl) tetraphosphate + H2O = 2 ADP + 2 H(+). Its function is as follows. Hydrolyzes diadenosine 5',5'''-P1,P4-tetraphosphate to yield ADP. This chain is Bis(5'-nucleosyl)-tetraphosphatase, symmetrical, found in Edwardsiella ictaluri (strain 93-146).